The chain runs to 262 residues: Small ribosomal subunit protein uS3 (262 aa).

Residues 39–107 (VREFLKKKLK…PVHVNIEEIR (69 aa)) form the KH type-2 domain. Positions 211–262 (NDAPVVEEPQEERRKRPGRPEGRRREGEGRPAGQRRGAGAGARRGTDAKTGE) are disordered. Positions 221 to 239 (EERRKRPGRPEGRRREGEG) are enriched in basic and acidic residues.

This sequence belongs to the universal ribosomal protein uS3 family. In terms of assembly, part of the 30S ribosomal subunit. Forms a tight complex with proteins S10 and S14.

Its function is as follows. Binds the lower part of the 30S subunit head. Binds mRNA in the 70S ribosome, positioning it for translation. This chain is Small ribosomal subunit protein uS3, found in Ralstonia pickettii (strain 12J).